The chain runs to 601 residues: MNLIMPFSIITLTILTIPIMMSYTNKYKTKSYPYHVTSSVSYAFMTSMIPTMMFLLSNQDSYISNWHWMTMQTMKLSLSFKLDFFSIIFVSVALFVTWSIMEFSLWYMHSDPYINQFFKYLLLFLITMMILVTANNMFQLFIGWEGVGIMSFLLIGWWYGRTDANTAALQAILYNRIGDIGFILTMAWLLLHLNSWDLQQIFMLKPTNLLPLLGLLVAAAGKSAQFGLHPWLPSAMEGPTPVSALLHSSTMVVAGIFLLVRFYPLMQNNPTILTMTLCLGAITTLFTAICALTQNDIKKIIAFSTSSQLGLMMVTIGINQPHLAFLHICTHAFFKAMLFMCSGSIIHSLNNEQDIRKMGGLLKAMPFTSSCLMIGSLALTGMPFLTGFYSKDLIIESANTSYSNAWALLITLLATSFTASYSTRLIYFSSLGPPRYLPLITINENNPNLLKPIKRLALGSIFAGFLISNYIPPLITPQTTMPLYMKLSALAVTIMGFMVAMGLNNITLNLKPERPNPLHSFSSLLGYYPNIIHRTTPYYILMMSQNLASLTDILWLEKLAPKSLSQMQLSASMITSNQKGLIKLYFMSFIISMTLATMLII.

15 helical membrane passes run 3–23 (LIMPFSIITLTILTIPIMMSY), 36–56 (VTSSVSYAFMTSMIPTMMFLL), 84–104 (FFSIIFVSVALFVTWSIMEFS), 114–134 (INQFFKYLLLFLITMMILVTA), 140–160 (LFIGWEGVGIMSFLLIGWWYG), 171–191 (AILYNRIGDIGFILTMAWLLL), 201–221 (IFMLKPTNLLPLLGLLVAAAG), 240–260 (TPVSALLHSSTMVVAGIFLLV), 272–292 (ILTMTLCLGAITTLFTAICAL), 324–346 (AFLHICTHAFFKAMLFMCSGSII), 365–385 (MPFTSSCLMIGSLALTGMPFL), 404–426 (NAWALLITLLATSFTASYSTRLI), 456–476 (LALGSIFAGFLISNYIPPLIT), 483–503 (LYMKLSALAVTIMGFMVAMGL), and 581–601 (LIKLYFMSFIISMTLATMLII).

It belongs to the complex I subunit 5 family.

The protein localises to the mitochondrion inner membrane. The catalysed reaction is a ubiquinone + NADH + 5 H(+)(in) = a ubiquinol + NAD(+) + 4 H(+)(out). Core subunit of the mitochondrial membrane respiratory chain NADH dehydrogenase (Complex I) that is believed to belong to the minimal assembly required for catalysis. Complex I functions in the transfer of electrons from NADH to the respiratory chain. The immediate electron acceptor for the enzyme is believed to be ubiquinone. The sequence is that of NADH-ubiquinone oxidoreductase chain 5 (MT-ND5) from Dasypus novemcinctus (Nine-banded armadillo).